The primary structure comprises 178 residues: uncharacterized protein (178 aa).

Helical transmembrane passes span Ala-6–Leu-26 and Lys-154–Ile-174.

It is found in the cell membrane. This is an uncharacterized protein from Methanocaldococcus jannaschii (strain ATCC 43067 / DSM 2661 / JAL-1 / JCM 10045 / NBRC 100440) (Methanococcus jannaschii).